We begin with the raw amino-acid sequence, 66 residues long: UPF0391 membrane protein AM1_5042 (66 aa).

The next 2 membrane-spanning stretches (helical) occupy residues 4–24 and 28–47; these read LTLT…SGIA and AAIA…LVWP.

It belongs to the UPF0391 family.

The protein resides in the cell membrane. The sequence is that of UPF0391 membrane protein AM1_5042 from Acaryochloris marina (strain MBIC 11017).